A 217-amino-acid chain; its full sequence is MSTLKEQLTAHVASYDHWAQRRRYGPDGHNNRSLWVLACMDERLPVDEALGIHVDTPAGGGDAHCFRNAGGIVTDDAIRSAMLTCNFFGTKEIVIVQHTQCGMLSGNANEMEKVLREKGMDTDNITLDPTLPELQLAKGAFAKWIGMMDDVDETCMKTINAFKNHPLIPKDIVVSGWVWEVENRRLRAPTLDKEKRARTDCTPTPYGVKGNQPPRWK.

Residues C39, H98, and C101 each contribute to the Zn(2+) site. Positions 192-217 are disordered; the sequence is DKEKRARTDCTPTPYGVKGNQPPRWK.

Belongs to the beta-class carbonic anhydrase family. Forms only homooctamers in solution. Zn(2+) serves as cofactor.

The enzyme catalyses carbon disulfide + 2 H2O = 2 hydrogen sulfide + CO2 + 2 H(+). It participates in sulfur metabolism; hydrogen sulfide biosynthesis. Functionally, catalyzes the conversion of carbon disulfide into hydrogen sulfide and carbon dioxide, with carbonyl sulfide as an intermediate. Likely plays a key role in sulfur metabolism that allows A.thiooxidans S1p to grow on carbon disulfide as the main carbon and energy source. Does not show carbonic anhydrase activity (hydration of CO(2) to carbonate). The polypeptide is Carbon disulfide hydrolase (Acidithiobacillus thiooxidans (Thiobacillus thiooxidans)).